Consider the following 106-residue polypeptide: UPF0449 protein C19orf25 homolog (106 aa).

It belongs to the UPF0449 family.

This chain is UPF0449 protein C19orf25 homolog, found in Xenopus tropicalis (Western clawed frog).